A 713-amino-acid chain; its full sequence is Protein argonaute (713 aa).

The segment at 18 to 129 (EFIPKEVHFY…IKNIRKHKVV (112 aa)) is N-terminal domain. Positions 164–257 (HLWDFVNRDK…FAPQFCNLVF (94 aa)) constitute a PAZ domain. The segment at 213–218 (HIIKYY) is binds 3'-end of gDNA. The tract at residues 346-488 (DVPEIIRNKN…QIMGKLGIKY (143 aa)) is mid domain. Positions 426-699 (CFALIIGKEK…FVKALGKNWK (274 aa)) constitute a Piwi domain. A divalent metal cation contacts are provided by glutamine 457, glutamine 479, and lysine 483. Positions 457-460 (QNIL) are binds 5'-phosphorylated end of gDNA. Catalysis depends on residues aspartate 504, glutamate 541, and aspartate 570. Aspartate 504 contacts Mn(2+). Aspartate 570 contacts Mn(2+). Binds 5'-phosphorylated end of gDNA regions lie at residues 625–632 (HKTPFGSN) and 678–679 (LR). Aspartate 688 is an active-site residue. Aspartate 688 and isoleucine 713 together coordinate Mn(2+).

The protein belongs to the argonaute family. Long pAgo subfamily. It depends on a divalent metal cation as a cofactor.

Its activity is regulated as follows. DNA cleavage is inhibited by EDTA. In terms of biological role, a DNA-guided ssDNA endonuclease that may play a role in defense against invading genetic elements. Uses short ssDNA sequences as guides (gDNA) to bind complementary target strands, resulting in slicing of the target DNA (tDNA). Endonucleolytically cleaves tDNA (the gDNA indicates where to cleave); two major and two minor products are seen which correspond to cleavage sites between nucleotides 9/10, 10/11, 13/14, and 14/15 downstream of the target residue base-paired with the 5'-end of the gDNA. Efficient guide-dependent tDNA cleavage requires a minimal length of 15 bp and is maximal at 19 bp. Prefers gDNA with 5'-phosphorylated purines and 3'-pyrimidines; changing these bases alters the cleavage activity and patterns. Also has guide-independent activity on tDNA called 'chopping'. Probably a first round of guide-independent activity on an invading plasmid or virus would generate guide DNAs for subsequent, more efficient, guide-dependent degradation of invading nucleic acids. Has no activity on substrate with a mismatch at positions 10 and 11, on ssDNA or RNA, nor on DNA:RNA hybrids. Digests longer (750 bp) dsDNA as well as circular plasmid and naked genomic DNA, but not chromatin, in a guide DNA-independent manner. Addition of endogenous histone A3 protects DNA from cleavage, while cleavage is insensitive to methylation. When plasmid encoding active or mutated protein (Ala-541) is transformed into Sulfolobus acidocaldarius about 25-fold fewer transformants are found with active protein; reduced levels of plasmid are found in wild-type transformed cells. While S.acidocaldarius grows at a similar temperature to M.jannaschii (70 to 80 degrees Celsius) it has very different histone-like proteins, which presumably do not protect against MjAgo. Binds ssDNA, dsDNA and DNA-RNA hybrids; binding is most efficient with dsDNA. The polypeptide is Protein argonaute (Methanocaldococcus jannaschii (strain ATCC 43067 / DSM 2661 / JAL-1 / JCM 10045 / NBRC 100440) (Methanococcus jannaschii)).